A 101-amino-acid polypeptide reads, in one-letter code: Integration host factor subunit alpha (101 aa).

The protein belongs to the bacterial histone-like protein family. As to quaternary structure, heterodimer of an alpha and a beta chain.

This protein is one of the two subunits of integration host factor, a specific DNA-binding protein that functions in genetic recombination as well as in transcriptional and translational control. The protein is Integration host factor subunit alpha of Dinoroseobacter shibae (strain DSM 16493 / NCIMB 14021 / DFL 12).